Consider the following 261-residue polypeptide: MSVEQTYSWLRKAGSIDDLAHYIIPLFSGAEKKNWKGILGHLQHHGMFKNIKEGIQTVSKLKEKGFYGHIQKEEQYLKNKWQGPDVPIVTLPVDERNRRIRLEFGSKSGLAFQDKMFLFLSSDLDFGSVSALMTHEYHHVCRLGHLTKEEKDVTLLDTIIMEGLAEYAVYERFGRSQTAEWTTWYTPEQLQALYEKKIAPHRDIKRDNRLFPQLLFGKGYQPKMLGYAVGFNIVKKYLTASKASTADGLSIPAETFLDAML.

This is an uncharacterized protein from Bacillus subtilis (strain 168).